A 460-amino-acid chain; its full sequence is uncharacterized protein (460 aa).

This sequence to yeast YGL164c.

This is an uncharacterized protein from Schizosaccharomyces pombe (strain 972 / ATCC 24843) (Fission yeast).